A 268-amino-acid polypeptide reads, in one-letter code: MERYESLFAQLKERKEGAFVPFVTLGDPGIEQSLKIIDTLIEAGADALELGTPFSDPLADGPTIQNATLRAFAAGVTPAQCFEVLALIRQKHPTIPIGLLMYANLVFNKGIDEFYAECEKVGVDSVLVADVPVEESAPFRQAALRHNVAPIFICPPNADDDLLRQIASYGRGYTYLLSRAGVTGAENRAALPLNHLVAKLKEYNAAPPLQGFGISAPDQVKAAIDAGAAGAISGSAIVKIIEQHINEPEKMLAALKAFVQPMKAATRS.

Residues glutamate 49 and aspartate 60 each act as proton acceptor in the active site.

This sequence belongs to the TrpA family. As to quaternary structure, tetramer of two alpha and two beta chains.

It catalyses the reaction (1S,2R)-1-C-(indol-3-yl)glycerol 3-phosphate + L-serine = D-glyceraldehyde 3-phosphate + L-tryptophan + H2O. It participates in amino-acid biosynthesis; L-tryptophan biosynthesis; L-tryptophan from chorismate: step 5/5. The alpha subunit is responsible for the aldol cleavage of indoleglycerol phosphate to indole and glyceraldehyde 3-phosphate. In Escherichia coli O6:K15:H31 (strain 536 / UPEC), this protein is Tryptophan synthase alpha chain.